The sequence spans 459 residues: MSYKLEKEAFVSNLTGSSSIETCGLLLIGIACNVLWVNMTARNILPKGNLGFLVEFFIFCLIPLFVIYVSSKVGVFTLCIASFLPSFVLHVISPINWDVLRRKPGCCLTKKNENTFDRRIAGVTFYRSQMMLVTVTCILAVDFTLFPRRYAKVETWGTSLMDLGVGSFMFSSGTVAGRKNDIKKPNAFKNVLWNSFILLILGFARMFLTKSINYQEHVSEYGMHWNFFFTLGFMALGVFFFRRSLKKVSYFNLATFITLLHHCLLVLTPFQKWALSAPRTNILAQNREGIASLPGYIAIYFYGMYTGSVVLADRPLMYTRAESWKRFQRLLFPLCILLVLYLVSNFLSVGVSRRLANTPYVANVAFINMFFLTIYILIDAYLFPSSVPYGSRVPKLLEDANNNGLLVFLIANVLTGVVNLSFDTLHSSNAKGLTIMTMYLFIICYMAHWLAQHGIRFRL.

N-linked (GlcNAc...) asparagine glycosylation is present at N13. 13 helical membrane-spanning segments follow: residues 20 to 40 (IETC…VNMT), 50 to 70 (LGFL…IYVS), 73 to 93 (VGVF…HVIS), 120 to 140 (IAGV…CILA), 156 to 176 (WGTS…GTVA), 188 to 208 (FKNV…RMFL), 221 to 241 (YGMH…VFFF), 250 to 270 (YFNL…LTPF), 290 to 310 (IASL…GSVV), 331 to 351 (LFPL…SVGV), 364 to 384 (VAFI…YLFP), 405 to 425 (LLVF…FDTL), and 432 to 452 (GLTI…WLAQ).

It belongs to the PIGW family.

The protein localises to the endoplasmic reticulum membrane. The protein operates within glycolipid biosynthesis; glycosylphosphatidylinositol-anchor biosynthesis. In terms of biological role, probable acetyltransferase, which acetylates the inositol ring of phosphatidylinositol during biosynthesis of GPI-anchor. Has a role in meiosis. This is GPI-anchored wall transfer protein 1 (gwt1) from Schizosaccharomyces pombe (strain 972 / ATCC 24843) (Fission yeast).